A 584-amino-acid polypeptide reads, in one-letter code: MRTKYCGNIRIIDLHKSVILCGWVHKIRNFSQFIFIDMRDWTGIVQLVFEKKNNKVFTKAVNLKNESCIQVIGIVKKRNANNNNLDTGEIEILVNKIKVFNISKNLPLDYSNNSNDDIRLKYRYLDLRRSELLENLKIRNKITHLIRIFMENKNFLDIETPFLTKSTPEGARDYLVPSRNYPGNFYALPQSPQLFKQILMISGIDKYYQIVKCFRDEDLRSDRQPEFTQIDIEASFVSSTKIRNLVETLIKKIWLKVINYNLNKFPKISFYDSMKRYGSDKPDLRNPMEIVDISDIVIEEKVASFFQINLKKKNRIALLCFGQGNKISQKKIDEYSNYVKKFGAKKLFYIKINKIENRFQDIQSSIKNILDKNTLENILRKTNAKNGNILFLLADEEKIVNKSLGMLRIKLGNDFIFFKKNTWKPVWIVDFPMFKQNSDGKFSSNHHPFTALKKNNQNKLEKNPNLAISDSYDLVINGYEIGGGSVRIHDAKIQKKVFNIIGIEKQFQREKFGFLIEALKYGPPPHAGIALGLDRIVMLLTNTNNIRDVIAFPKTTSANCLMTDSPSKLKKSILNELGINILKK.

Glu-169 is an L-aspartate binding site. The tract at residues 193–196 is aspartate; the sequence is QLFK. Arg-215 is a binding site for L-aspartate. ATP-binding positions include 215 to 217 and Gln-224; that span reads RDE. His-446 provides a ligand contact to L-aspartate. Glu-480 is an ATP binding site. Arg-487 provides a ligand contact to L-aspartate. 532–535 lines the ATP pocket; sequence GLDR.

This sequence belongs to the class-II aminoacyl-tRNA synthetase family. Type 1 subfamily. Homodimer.

Its subcellular location is the cytoplasm. It carries out the reaction tRNA(Asp) + L-aspartate + ATP = L-aspartyl-tRNA(Asp) + AMP + diphosphate. Catalyzes the attachment of L-aspartate to tRNA(Asp) in a two-step reaction: L-aspartate is first activated by ATP to form Asp-AMP and then transferred to the acceptor end of tRNA(Asp). In Buchnera aphidicola subsp. Schizaphis graminum (strain Sg), this protein is Aspartate--tRNA ligase.